Consider the following 231-residue polypeptide: MKRAVVVFSGGQDSTTCLVQALQQYDEVHCVTFDYGQRHRAEIDVARELALKLGARAHKVLDVTLLNELAVSSLTRDSIPVPDYEPEADGIPNTFVPGRNILFLTLAAIYAYQVKAEAVITGVCETDFSGYPDCRDEFVKALNHAVSLGMAKDIRFETPLMWIDKAETWALADYYGKLDLVRNETLTCYNGIKGDGCGHCAACNLRANGLNHYLADKPTVMAAMKQKTGLK.

8-18 lines the ATP pocket; sequence FSGGQDSTTCL. Zn(2+)-binding residues include Cys-188, Cys-197, Cys-200, and Cys-203.

This sequence belongs to the QueC family. Zn(2+) is required as a cofactor.

It catalyses the reaction 7-carboxy-7-deazaguanine + NH4(+) + ATP = 7-cyano-7-deazaguanine + ADP + phosphate + H2O + H(+). It participates in purine metabolism; 7-cyano-7-deazaguanine biosynthesis. Functionally, catalyzes the ATP-dependent conversion of 7-carboxy-7-deazaguanine (CDG) to 7-cyano-7-deazaguanine (preQ(0)). This is 7-cyano-7-deazaguanine synthase from Escherichia coli O1:K1 / APEC.